We begin with the raw amino-acid sequence, 100 residues long: MPSSVTLLLLMGLSVCTSAEDGGEEQTLGAEAGPWVTVTLEAGAVASIQLQLQEVKRGKASQFFGLMGKRVRGYQMGQRGLLGRRASSTKGSVDEDQGAE.

An N-terminal signal peptide occupies residues 1–19 (MPSSVTLLLLMGLSVCTSA). 2 consecutive propeptides follow at residues 20–55 (EDGGEEQTLGAEAGPWVTVTLEAGAVASIQLQLQEV) and 85–100 (RASSTKGSVDEDQGAE). Residues 80–100 (GLLGRRASSTKGSVDEDQGAE) form a disordered region.

Belongs to the tachykinin family.

It localises to the secreted. In terms of biological role, tachykinins are active peptides which excite neurons, evoke behavioral responses, are potent vasodilators and secretagogues, and contract (directly or indirectly) many smooth muscles. The protein is Tachykinin-4 of Oryctolagus cuniculus (Rabbit).